The primary structure comprises 382 residues: UDP-4-amino-4-deoxy-L-arabinose--oxoglutarate aminotransferase (382 aa).

Lys-182 carries the post-translational modification N6-(pyridoxal phosphate)lysine.

This sequence belongs to the DegT/DnrJ/EryC1 family. ArnB subfamily. Homodimer. Requires pyridoxal 5'-phosphate as cofactor.

The enzyme catalyses UDP-4-amino-4-deoxy-beta-L-arabinose + 2-oxoglutarate = UDP-beta-L-threo-pentopyranos-4-ulose + L-glutamate. It functions in the pathway nucleotide-sugar biosynthesis; UDP-4-deoxy-4-formamido-beta-L-arabinose biosynthesis; UDP-4-deoxy-4-formamido-beta-L-arabinose from UDP-alpha-D-glucuronate: step 2/3. The protein operates within bacterial outer membrane biogenesis; lipopolysaccharide biosynthesis. Catalyzes the conversion of UDP-4-keto-arabinose (UDP-Ara4O) to UDP-4-amino-4-deoxy-L-arabinose (UDP-L-Ara4N). The modified arabinose is attached to lipid A and is required for resistance to polymyxin and cationic antimicrobial peptides. This Yersinia enterocolitica serotype O:8 / biotype 1B (strain NCTC 13174 / 8081) protein is UDP-4-amino-4-deoxy-L-arabinose--oxoglutarate aminotransferase.